Here is a 339-residue protein sequence, read N- to C-terminus: Probable long-chain-alcohol O-fatty-acyltransferase 7 (339 aa).

Transmembrane regions (helical) follow at residues 7 to 27 (SLIN…CLPP), 39 to 59 (IFPV…SIFT), 113 to 133 (HLST…LYVH), 143 to 163 (FLLC…LTLL), 226 to 246 (MLIG…VVFF), 254 to 274 (TGEV…EVAA), and 287 to 307 (PVVS…WLFF).

The protein belongs to the wax synthase family.

It is found in the membrane. The catalysed reaction is a long chain fatty alcohol + a fatty acyl-CoA = a wax ester + CoA. Functionally, catalyzes the final step in the synthesis of long-chain linear esters (waxes). This chain is Probable long-chain-alcohol O-fatty-acyltransferase 7 (AT7), found in Arabidopsis thaliana (Mouse-ear cress).